Here is a 59-residue protein sequence, read N- to C-terminus: Large ribosomal subunit protein uL30 (59 aa).

Belongs to the universal ribosomal protein uL30 family. In terms of assembly, part of the 50S ribosomal subunit.

This chain is Large ribosomal subunit protein uL30, found in Macrococcus caseolyticus (strain JCSC5402) (Macrococcoides caseolyticum).